The primary structure comprises 337 residues: UbiA prenyltransferase domain-containing protein 1 (337 aa).

At A2 the chain carries N-acetylalanine. The next 8 membrane-spanning stretches (helical) occupy residues 82–102 (LLVGCAVAVLAVHGAGNLVNT), 133–153 (FGVFLYTLGCVCAACLYCLSP), 159–179 (LALIYFGGLSGSFLYTGGIGF), 187–207 (LVILITFGPLAVMFAYAVQVG), 208–228 (SLAVFPLVYAIPLALSTEAVL), 244–266 (IVTLAILIGPTLSYVLYNTLLFL), 276–296 (THCSISLALPLLTVPMAFSLE), and 314–334 (LNLLLGLFYVFGIILAPAGSL).

It belongs to the UbiA prenyltransferase family. As to quaternary structure, interacts with HMGCR and SOAT1.

Its subcellular location is the endoplasmic reticulum membrane. It localises to the golgi apparatus membrane. The protein resides in the mitochondrion membrane. It catalyses the reaction menadiol + (2E,6E,10E)-geranylgeranyl diphosphate = menaquinol-4 + diphosphate. The catalysed reaction is all-trans-decaprenyl diphosphate + 4-hydroxybenzoate = 4-hydroxy-3-(all-trans-decaprenyl)benzoate + diphosphate. The protein operates within quinol/quinone metabolism; menaquinone biosynthesis. It participates in cofactor biosynthesis; ubiquinone biosynthesis. Functionally, prenyltransferase that mediates the formation of menaquinone-4 (MK-4) and coenzyme Q10. MK-4 is a vitamin K2 isoform required for endothelial cell development. Mediates the conversion of phylloquinone (PK) into MK-4, probably by cleaving the side chain of phylloquinone (PK) to release 2-methyl-1,4-naphthoquinone (menadione; K3) and then prenylating it with geranylgeranyl pyrophosphate (GGPP) to form MK-4. Also plays a role in cardiovascular development independently of MK-4 biosynthesis, by acting as a coenzyme Q10 biosynthetic enzyme: coenzyme Q10, also named ubiquinone, plays an important antioxidant role in the cardiovascular system. Mediates biosynthesis of coenzyme Q10 in the Golgi membrane, leading to protect cardiovascular tissues from NOS3/eNOS-dependent oxidative stress. The sequence is that of UbiA prenyltransferase domain-containing protein 1 (UBIAD1) from Ailuropoda melanoleuca (Giant panda).